The primary structure comprises 478 residues: Ketoisovalerate oxidoreductase subunit VorA (478 aa).

In terms of assembly, heterotrimer of the VorA, VorB and VorC subunits.

The sequence is that of Ketoisovalerate oxidoreductase subunit VorA (vorA) from Methanothermobacter marburgensis (strain ATCC BAA-927 / DSM 2133 / JCM 14651 / NBRC 100331 / OCM 82 / Marburg) (Methanobacterium thermoautotrophicum).